Consider the following 493-residue polypeptide: Non-cyanogenic beta-glucosidase (493 aa).

The N-terminal stretch at 1–18 (MDFIVAIFALFVISSFTI) is a signal peptide. Asparagine 34 is a glycosylation site (N-linked (GlcNAc...) asparagine). Residues glutamine 54, histidine 158, and 203–204 (NE) contribute to the a beta-D-glucoside site. Glutamate 204 functions as the Proton donor in the catalytic mechanism. An N-linked (GlcNAc...) asparagine glycan is attached at asparagine 335. Position 346 (tyrosine 346) interacts with a beta-D-glucoside. N-linked (GlcNAc...) asparagine glycans are attached at residues asparagine 371 and asparagine 412. A beta-D-glucoside contacts are provided by residues glutamate 422, tryptophan 471, 478-479 (EW), and phenylalanine 487. Glutamate 422 serves as the catalytic Nucleophile.

This sequence belongs to the glycosyl hydrolase 1 family. As to expression, leaves.

The catalysed reaction is Hydrolysis of terminal, non-reducing beta-D-glucosyl residues with release of beta-D-glucose.. The sequence is that of Non-cyanogenic beta-glucosidase from Trifolium repens (Creeping white clover).